A 141-amino-acid chain; its full sequence is Large ribosomal subunit protein uL11 (141 aa).

The protein belongs to the universal ribosomal protein uL11 family. Part of the ribosomal stalk of the 50S ribosomal subunit. Interacts with L10 and the large rRNA to form the base of the stalk. L10 forms an elongated spine to which L12 dimers bind in a sequential fashion forming a multimeric L10(L12)X complex. Post-translationally, one or more lysine residues are methylated.

Forms part of the ribosomal stalk which helps the ribosome interact with GTP-bound translation factors. The chain is Large ribosomal subunit protein uL11 from Coprothermobacter proteolyticus (strain ATCC 35245 / DSM 5265 / OCM 4 / BT).